We begin with the raw amino-acid sequence, 203 residues long: Small ribosomal subunit protein uS4 (203 aa).

Residues 93–153 (RRLDNIVYRL…DKSKNLQQVK (61 aa)) enclose the S4 RNA-binding domain.

It belongs to the universal ribosomal protein uS4 family. As to quaternary structure, part of the 30S ribosomal subunit. Contacts protein S5. The interaction surface between S4 and S5 is involved in control of translational fidelity.

In terms of biological role, one of the primary rRNA binding proteins, it binds directly to 16S rRNA where it nucleates assembly of the body of the 30S subunit. Its function is as follows. With S5 and S12 plays an important role in translational accuracy. The polypeptide is Small ribosomal subunit protein uS4 (Lactobacillus gasseri (strain ATCC 33323 / DSM 20243 / BCRC 14619 / CIP 102991 / JCM 1131 / KCTC 3163 / NCIMB 11718 / NCTC 13722 / AM63)).